The primary structure comprises 209 residues: Large ribosomal subunit protein uL3 (209 aa).

Residues 129–153 are disordered; that stretch reads SRGPMSHGSKFHRAPGSMGAASDPS.

Belongs to the universal ribosomal protein uL3 family. As to quaternary structure, part of the 50S ribosomal subunit. Forms a cluster with proteins L14 and L19.

Functionally, one of the primary rRNA binding proteins, it binds directly near the 3'-end of the 23S rRNA, where it nucleates assembly of the 50S subunit. This Clostridium perfringens (strain 13 / Type A) protein is Large ribosomal subunit protein uL3.